The chain runs to 529 residues: Isoleucine--tRNA ligase (529 aa).

Glu-482 serves as a coordination point for L-isoleucyl-5'-AMP. The short motif at Lys-523–Ser-527 is the 'KMSKS' region element. Lys-526 serves as a coordination point for ATP.

The protein belongs to the class-I aminoacyl-tRNA synthetase family. IleS type 1 subfamily. Monomer.

Its subcellular location is the cytoplasm. The enzyme catalyses tRNA(Ile) + L-isoleucine + ATP = L-isoleucyl-tRNA(Ile) + AMP + diphosphate. Functionally, catalyzes the attachment of isoleucine to tRNA(Ile). As IleRS can inadvertently accommodate and process structurally similar amino acids such as valine, to avoid such errors it has two additional distinct tRNA(Ile)-dependent editing activities. One activity is designated as 'pretransfer' editing and involves the hydrolysis of activated Val-AMP. The other activity is designated 'posttransfer' editing and involves deacylation of mischarged Val-tRNA(Ile). The chain is Isoleucine--tRNA ligase (ileS) from Aquifex pyrophilus.